A 498-amino-acid chain; its full sequence is Nucleobase transporter PlAzg2 (498 aa).

Transmembrane regions (helical) follow at residues Leu88–Ile108, Ala118–Gly138, Leu142–Met162, Ala169–Val189, Ala203–Ile223, Phe236–Ile256, Val259–Ala279, Thr312–Ile332, Ile357–Ile377, Ile388–Pro408, Val412–Phe432, Phe443–Ile463, and Val478–Met498.

The protein belongs to the nucleobase:cation symporter-2 (NCS2) (TC 2.A.40) family. Azg-like subfamily.

It localises to the cell membrane. Inhibited by the proton gradient disruptor carbonyl cyanide m-chlorophenylhydrazone (CCCP), but not by the sodium gradient disruptor ouabain. Functionally, transports adenine, guanine, hypoxanthine, xanthine, cytosine and uracil. Transport is probably proton-dependent. The chain is Nucleobase transporter PlAzg2 from Paenibacillus larvae subsp. larvae (strain NRRL B-3650 / LMG 16245).